Reading from the N-terminus, the 591-residue chain is V-type ATP synthase alpha chain (591 aa).

233-240 lines the ATP pocket; sequence GPFGAGKT.

The protein belongs to the ATPase alpha/beta chains family.

The enzyme catalyses ATP + H2O + 4 H(+)(in) = ADP + phosphate + 5 H(+)(out). In terms of biological role, produces ATP from ADP in the presence of a proton gradient across the membrane. The V-type alpha chain is a catalytic subunit. In Streptococcus pyogenes serotype M5 (strain Manfredo), this protein is V-type ATP synthase alpha chain.